Reading from the N-terminus, the 1198-residue chain is Structural polyprotein (1198 aa).

The interaction with host EXOC1 stretch occupies residues 2–15 (TKKPGGPGKNRAIN). A hydrophobic; homodimerization of capsid protein C region spans residues 37-72 (LLDGRGPVRFVLALITFFKFTALAPTKALLGRWRAV). A propeptide spans 106–127 (GGNESSIMWLASLAIVIACAGA) (ER anchor for the capsid protein C, removed in mature form by serine protease NS3). The helical transmembrane segment at 110–130 (SSIMWLASLAIVIACAGAMKL) threads the bilayer. A glycan (N-linked (GlcNAc...) asparagine; by host) is linked at Asn-142. The next 2 helical transmembrane spans lie at 254-274 (WIIR…MLGS) and 280-294 (VVFT…PAYS). 6 disulfides stabilise this stretch: Cys-297–Cys-324, Cys-354–Cys-410, Cys-354–Cys-415, Cys-368–Cys-399, Cys-386–Cys-410, and Cys-386–Cys-415. The interval 392–405 (DRGWGNGCGLFGKG) is fusion peptide. Asn-448 carries N-linked (GlcNAc...) asparagine; by host glycosylation. 2 disulfide bridges follow: Cys-484–Cys-581 and Cys-598–Cys-629. A run of 2 helical transmembrane segments spans residues 747–767 (FGGM…WMGV) and 774–794 (IALA…NVHA). 6 disulfides stabilise this stretch: Cys-798–Cys-809, Cys-849–Cys-937, Cys-973–Cys-1017, Cys-1074–Cys-1123, Cys-1085–Cys-1106, and Cys-1107–Cys-1110. Asn-924 and Asn-1001 each carry an N-linked (GlcNAc...) asparagine; by host glycan. The disordered stretch occupies residues 1151–1178 (MIDPFSAGPSGDVSGHPGGPSQEVDGQI).

As to quaternary structure, homodimer. Interacts (via N-terminus) with host EXOC1 (via C-terminus); this interaction results in EXOC1 degradation through the proteasome degradation pathway. Interacts with host CAPRIN1; this interaction is involved in the suppression of the integrated stress response. Forms heterodimers with envelope protein E in the endoplasmic reticulum and Golgi. In terms of assembly, homodimer; in the endoplasmic reticulum and Golgi. Interacts with protein prM. Interacts with non-structural protein 1. Genome polyprotein: Specific enzymatic cleavages in vivo yield mature proteins. Cleavages in the lumen of endoplasmic reticulum are performed by host signal peptidase, whereas cleavages in the cytoplasmic side are performed by serine protease NS3. Signal cleavage at the 2K-4B site requires a prior NS3 protease-mediated cleavage at the 4A-2K site. Post-translationally, cleaved in post-Golgi vesicles by a host furin, releasing the mature small envelope protein M, and peptide pr. This cleavage is incomplete as up to 30% of viral particles still carry uncleaved prM. In terms of processing, N-glycosylated.

It localises to the secreted. The protein localises to the virion membrane. It is found in the host endoplasmic reticulum membrane. Its function is as follows. Plays a role in virus budding by binding to the cell membrane and gathering the viral RNA into a nucleocapsid that forms the core of a mature virus particle. During virus entry, may induce genome penetration into the host cytoplasm after hemifusion induced by the surface proteins. Can migrate to the cell nucleus where it modulates host functions. Overcomes the anti-viral effects of host EXOC1 by sequestering and degrading the latter through the proteasome degradation pathway. Inhibits the integrated stress response (ISR) in the infected cell by binding to host CAPRIN1. Inhibits RNA silencing by interfering with host Dicer. In terms of biological role, prevents premature fusion activity of envelope proteins in trans-Golgi by binding to envelope protein E at pH6.0. After virion release in extracellular space, gets dissociated from E dimers. Functionally, acts as a chaperone for envelope protein E during intracellular virion assembly by masking and inactivating envelope protein E fusion peptide. prM is the only viral peptide matured by host furin in the trans-Golgi network probably to avoid catastrophic activation of the viral fusion activity in acidic Golgi compartment prior to virion release. prM-E cleavage is inefficient, and many virions are only partially matured. These uncleaved prM would play a role in immune evasion. Its function is as follows. May play a role in virus budding. Exerts cytotoxic effects by activating a mitochondrial apoptotic pathway through M ectodomain. May display a viroporin activity. Binds to host cell surface receptor and mediates fusion between viral and cellular membranes. Envelope protein is synthesized in the endoplasmic reticulum in the form of heterodimer with protein prM. They play a role in virion budding in the ER, and the newly formed immature particle is covered with 60 spikes composed of heterodimer between precursor prM and envelope protein E. The virion is transported to the Golgi apparatus where the low pH causes dissociation of PrM-E heterodimers and formation of E homodimers. prM-E cleavage is inefficient, and many virions are only partially matured. These uncleaved prM would play a role in immune evasion. The chain is Structural polyprotein from Ardeidae (herons).